The following is a 732-amino-acid chain: uncharacterized protein (732 aa).

This sequence belongs to the mimivirus L137 family.

This is an uncharacterized protein from Acanthamoeba polyphaga mimivirus (APMV).